Reading from the N-terminus, the 349-residue chain is Peroxidase 22 (349 aa).

The N-terminal stretch at 1-29 is a signal peptide; that stretch reads MGFSPSFSCSAIGALILGCLLLQASNSNA. Q30 carries the pyrrolidone carboxylic acid modification. Cystine bridges form between C40/C120, C73/C78, C126/C329, and C206/C238. Catalysis depends on H71, which acts as the Proton acceptor. Residues D72, V75, G77, D79, and S81 each contribute to the Ca(2+) site. The N-linked (GlcNAc...) asparagine glycan is linked to N86. Residue P168 coordinates substrate. N-linked (GlcNAc...) asparagine glycosylation is found at N173 and N187. H199 is a binding site for heme b. Residue T200 participates in Ca(2+) binding. N-linked (GlcNAc...) asparagine glycosylation is found at N217 and N243. Positions 251, 254, and 259 each coordinate Ca(2+).

This sequence belongs to the peroxidase family. Classical plant (class III) peroxidase subfamily. The cofactor is heme b. It depends on Ca(2+) as a cofactor. Mainly expressed in roots.

Its subcellular location is the secreted. The protein resides in the vacuole. It catalyses the reaction 2 a phenolic donor + H2O2 = 2 a phenolic radical donor + 2 H2O. In terms of biological role, removal of H(2)O(2), oxidation of toxic reductants, biosynthesis and degradation of lignin, suberization, auxin catabolism, response to environmental stresses such as wounding, pathogen attack and oxidative stress. These functions might be dependent on each isozyme/isoform in each plant tissue. The polypeptide is Peroxidase 22 (PER22) (Arabidopsis thaliana (Mouse-ear cress)).